Here is a 795-residue protein sequence, read N- to C-terminus: Putative replication origin-binding protein (795 aa).

The Helicase ATP-binding domain maps to 121-289; sequence WLSNDKIKTL…DNFGKSIVVN (169 aa). 134–141 contributes to the ATP binding site; that stretch reads SPMGTGKT.

The protein belongs to the mimivirus R1 family.

Functionally, probably involved in DNA replication. May bind the genome origin of replication (ori). This chain is Putative replication origin-binding protein, found in Acanthamoeba polyphaga (Amoeba).